A 510-amino-acid polypeptide reads, in one-letter code: Inositol-3-phosphate synthase (510 aa).

Residues Gly70, Gly71, Asn72, Asn73, Asp143, Ile180, Gln190, Arg193, Thr230, Ala231, Asn232, Thr233, Gly281, Ser282, Asp306, Ser309, Asn340, Asn341, Asp342, Lys355, Gly393, Asp394, Asp422, and Ser423 each coordinate NAD(+).

Belongs to the myo-inositol 1-phosphate synthase family. NAD(+) serves as cofactor.

It localises to the cytoplasm. It is found in the cytosol. The protein localises to the nucleus. The enzyme catalyses D-glucose 6-phosphate = 1D-myo-inositol 3-phosphate. Its pathway is polyol metabolism; myo-inositol biosynthesis; myo-inositol from D-glucose 6-phosphate: step 1/2. In terms of biological role, key enzyme in myo-inositol biosynthesis pathway that catalyzes the conversion of glucose 6-phosphate to 1-myo-inositol 1-phosphate in a NAD-dependent manner. This chain is Inositol-3-phosphate synthase, found in Hordeum vulgare (Barley).